Here is a 138-residue protein sequence, read N- to C-terminus: Ribulose bisphosphate carboxylase small subunit (138 aa).

This sequence belongs to the RuBisCO small chain family. As to quaternary structure, heterohexadecamer of 8 large and 8 small subunits.

Its subcellular location is the plastid. It localises to the chloroplast. Its function is as follows. RuBisCO catalyzes two reactions: the carboxylation of D-ribulose 1,5-bisphosphate, the primary event in carbon dioxide fixation, as well as the oxidative fragmentation of the pentose substrate in the photorespiration process. Both reactions occur simultaneously and in competition at the same active site. Although the small subunit is not catalytic it is essential for maximal activity. The chain is Ribulose bisphosphate carboxylase small subunit from Antithamnion sp. (Red alga).